We begin with the raw amino-acid sequence, 845 residues long: Protein P (845 aa).

The interval 1-179 (MPLSYQHFRK…FCGSPYSWEQ (179 aa)) is terminal protein domain (TP). The interval 180-348 (ELQHGRLVIK…YCLSHLVNLR (169 aa)) is spacer. Positions 226-252 (GLQPRQGRLASSQPSRSGSIRAKAHPS) are disordered. The segment covering 234–243 (LASSQPSRSG) has biased composition (polar residues). The polymerase/reverse transcriptase domain (RT) stretch occupies residues 349–692 (EDWGPCDEHG…YMNLYPVARQ (344 aa)). The Reverse transcriptase domain occupies 359–602 (EHHIRIPRTP…YSLNFMGYII (244 aa)). Mg(2+) is bound by residues aspartate 431, aspartate 553, and aspartate 554. The segment at 693-845 (RPGLCQVFAD…SPLHVAWRPP (153 aa)) is rnaseH domain (RH).

This sequence belongs to the hepadnaviridae P protein family.

It catalyses the reaction DNA(n) + a 2'-deoxyribonucleoside 5'-triphosphate = DNA(n+1) + diphosphate. It carries out the reaction Endonucleolytic cleavage to 5'-phosphomonoester.. Activated by host HSP70 and HSP40 in vitro to be able to bind the epsilon loop of the pgRNA. Because deletion of the RNase H region renders the protein partly chaperone-independent, the chaperones may be needed indirectly to relieve occlusion of the RNA-binding site by this domain. Inhibited by several reverse-transcriptase inhibitors: Lamivudine, Adefovir and Entecavir. Its function is as follows. Multifunctional enzyme that converts the viral RNA genome into dsDNA in viral cytoplasmic capsids. This enzyme displays a DNA polymerase activity that can copy either DNA or RNA templates, and a ribonuclease H (RNase H) activity that cleaves the RNA strand of RNA-DNA heteroduplexes in a partially processive 3'- to 5'-endonucleasic mode. Neo-synthesized pregenomic RNA (pgRNA) are encapsidated together with the P protein, and reverse-transcribed inside the nucleocapsid. Initiation of reverse-transcription occurs first by binding the epsilon loop on the pgRNA genome, and is initiated by protein priming, thereby the 5'-end of (-)DNA is covalently linked to P protein. Partial (+)DNA is synthesized from the (-)DNA template and generates the relaxed circular DNA (RC-DNA) genome. After budding and infection, the RC-DNA migrates in the nucleus, and is converted into a plasmid-like covalently closed circular DNA (cccDNA). The activity of P protein does not seem to be necessary for cccDNA generation, and is presumably released from (+)DNA by host nuclear DNA repair machinery. The protein is Protein P of Homo sapiens (Human).